Reading from the N-terminus, the 216-residue chain is Imidazole glycerol phosphate synthase subunit HisH (216 aa).

The region spanning 2–216 (SVAIVDYGSG…LISNFLKWKP (215 aa)) is the Glutamine amidotransferase type-1 domain. Residue Cys-88 is the Nucleophile of the active site. Residues His-196 and Glu-198 contribute to the active site.

As to quaternary structure, heterodimer of HisH and HisF.

It localises to the cytoplasm. It catalyses the reaction 5-[(5-phospho-1-deoxy-D-ribulos-1-ylimino)methylamino]-1-(5-phospho-beta-D-ribosyl)imidazole-4-carboxamide + L-glutamine = D-erythro-1-(imidazol-4-yl)glycerol 3-phosphate + 5-amino-1-(5-phospho-beta-D-ribosyl)imidazole-4-carboxamide + L-glutamate + H(+). The catalysed reaction is L-glutamine + H2O = L-glutamate + NH4(+). The protein operates within amino-acid biosynthesis; L-histidine biosynthesis; L-histidine from 5-phospho-alpha-D-ribose 1-diphosphate: step 5/9. Functionally, IGPS catalyzes the conversion of PRFAR and glutamine to IGP, AICAR and glutamate. The HisH subunit catalyzes the hydrolysis of glutamine to glutamate and ammonia as part of the synthesis of IGP and AICAR. The resulting ammonia molecule is channeled to the active site of HisF. The chain is Imidazole glycerol phosphate synthase subunit HisH from Rhodopseudomonas palustris (strain ATCC BAA-98 / CGA009).